We begin with the raw amino-acid sequence, 176 residues long: NAD(P)H-quinone oxidoreductase subunit 6, chloroplastic (176 aa).

A run of 5 helical transmembrane segments spans residues isoleucine 10–threonine 30, proline 32–proline 52, alanine 61–methionine 81, leucine 92–isoleucine 112, and phenylalanine 152–serine 172.

The protein belongs to the complex I subunit 6 family. As to quaternary structure, NDH is composed of at least 16 different subunits, 5 of which are encoded in the nucleus.

Its subcellular location is the plastid. The protein resides in the chloroplast thylakoid membrane. The catalysed reaction is a plastoquinone + NADH + (n+1) H(+)(in) = a plastoquinol + NAD(+) + n H(+)(out). It carries out the reaction a plastoquinone + NADPH + (n+1) H(+)(in) = a plastoquinol + NADP(+) + n H(+)(out). Functionally, NDH shuttles electrons from NAD(P)H:plastoquinone, via FMN and iron-sulfur (Fe-S) centers, to quinones in the photosynthetic chain and possibly in a chloroplast respiratory chain. The immediate electron acceptor for the enzyme in this species is believed to be plastoquinone. Couples the redox reaction to proton translocation, and thus conserves the redox energy in a proton gradient. This is NAD(P)H-quinone oxidoreductase subunit 6, chloroplastic (ndhG) from Liriodendron tulipifera (Tuliptree).